The sequence spans 461 residues: V-type ATP synthase beta chain (461 aa).

It belongs to the ATPase alpha/beta chains family.

Functionally, produces ATP from ADP in the presence of a proton gradient across the membrane. The V-type beta chain is a regulatory subunit. This Clostridium botulinum (strain Langeland / NCTC 10281 / Type F) protein is V-type ATP synthase beta chain.